The chain runs to 700 residues: Phenylalanine ammonia-lyase hkm12 (700 aa).

Tyr82 functions as the Proton donor/acceptor in the catalytic mechanism. Residues 183 to 185 (ASG) constitute a cross-link (5-imidazolinone (Ala-Gly)). A 2,3-didehydroalanine (Ser) modification is found at Ser184. (E)-cinnamate-binding residues include Asn242, Gln325, Arg331, Asn361, Lys432, Glu460, and Asn463.

It belongs to the PAL/histidase family. In terms of processing, contains an active site 4-methylidene-imidazol-5-one (MIO), which is formed autocatalytically by cyclization and dehydration of residues Ala-Ser-Gly.

It catalyses the reaction L-phenylalanine = (E)-cinnamate + NH4(+). It participates in secondary metabolite biosynthesis. Phenylalanine ammonia-lyase; part of the gene cluster that mediates the biosynthesis of hancockiamides, an unusual new family of N-cinnamoylated piperazines. The NRPS hkm10 and the NmrA-like reductase hkm9 are proposed to convert two molecules of L-Phe to the intermediary piperazine called xenocockiamide A. Xenocockiamide A is then converted to hancockiamide D via a series of hydroxylations and O-methylations. The tyrosinase hkm6 may catalyze an aromatic hydroxylation, then the 2-oxoglutarate-dependent Fe(II) dioxygenase hkm4 and the FAD-dependent phenol hydroxylase hkm7 may catalyze consecutive hydroxylations to install 2 more hydroxy groups, and the methyltransferase hkm8 probably catalyzes two methylations using 2 molecules of S-adenosyl-L-methionine (SAM). The NRPS hkm11 activates and transfers trans-cinnamate supplied by the PAL hkm12 to hancockiamide D and produces hancockiamide A. NRPS Hkm11 has the flexibility to tolerate the bulky hancockiamide G as a substrate and the absence of the acetyl-transferase hkm3 opens up the opportunity for hkm11 to introduce a second N-cinnamoyl moiety. The cytochrome P450 monooxygenase hkm5 catalyzes the methylenedioxy bridge formation, converting hancockiamide A into hancockiamide G. Hkm5 can also convert hancockiamide B into hancockiamide C, and hancockiamide D into hancockiamide H. The N-acetyltransferase hkm3 finally transfers an acetyl group to 1-N of piperazine, converting hancockiamide A into hancockiamide B and hancockiamide G into hancockiamide C. The sequence is that of Phenylalanine ammonia-lyase hkm12 from Aspergillus hancockii.